Reading from the N-terminus, the 86-residue chain is MEQKRGMRKTRVGVVVSDKMDKTVVVAVERHVQHPLYKKTIKRTTKFKAHDENNECRVGDKVLIMETRPLSKEKRWRVVQILERAK.

The protein belongs to the universal ribosomal protein uS17 family. As to quaternary structure, part of the 30S ribosomal subunit.

In terms of biological role, one of the primary rRNA binding proteins, it binds specifically to the 5'-end of 16S ribosomal RNA. The polypeptide is Small ribosomal subunit protein uS17 (Caldicellulosiruptor bescii (strain ATCC BAA-1888 / DSM 6725 / KCTC 15123 / Z-1320) (Anaerocellum thermophilum)).